The primary structure comprises 787 residues: Dolichyl-diphosphooligosaccharide--protein glycosyltransferase subunit STT3A (787 aa).

Residues 1 to 18 (MAEPESSTAAAGGSRLRN) are Cytoplasmic-facing. The chain crosses the membrane as a helical span at residues 19-39 (ACGGVLCAFTLLLIGVLAFSI). The Lumenal portion of the chain corresponds to 40–125 (RLFSVIKYES…LSVETVCVFT (86 aa)). Positions 53-55 (EFD) match the DXD motif 1 motif. Position 55 (D55) interacts with Mn(2+). The helical transmembrane segment at 126 to 144 (APIFSANASWATYLLTKEA) threads the bilayer. The Cytoplasmic portion of the chain corresponds to 145–146 (KG). Residues 147 to 164 (TGAGLMAAAILAMVPSYI) traverse the membrane as a helical segment. At 165 to 175 (SRSVAGSYDNE) the chain is on the lumenal side. D173 and E175 together coordinate Mn(2+). A DXD motif 2 motif is present at residues 173-175 (DNE). A helical membrane pass occupies residues 176 to 195 (AVAIFALIFTFYLYVKTLNT). Residues 196–197 (GS) are Cytoplasmic-facing. A helical transmembrane segment spans residues 198–212 (LFYATLNALSYFYMV). The Lumenal segment spans residues 213–217 (CSWGG). A helical transmembrane segment spans residues 218 to 234 (YTFIINLIPIHVLLCIV). Residues 235–239 (TGRYS) are Cytoplasmic-facing. The helical transmembrane segment at 240 to 265 (SRLYIAYAPLVILGTLLAALVPVVGF) threads the bilayer. At 266 to 273 (NAVMTSEH) the chain is on the lumenal side. Residues 274 to 293 (FASFLVFIILHVVALVYYIK) form a helical membrane-spanning segment. At 294–306 (GLLTPRLFKVAMT) the chain is on the cytoplasmic side. A helical membrane pass occupies residues 307 to 327 (LVITVGLAVCFAVIAILIALV). Topologically, residues 328–365 (ASSPTKGWSGRSLSLLDPTYASKYIPIIASVSEHQPPT) are lumenal. Positions 357 to 360 (SVSE) match the SVSE motif motif. A helical membrane pass occupies residues 366–388 (WPSYFMDINVLAFLIPAGIISCF). At 389–394 (LPLSDA) the chain is on the cytoplasmic side. The helical transmembrane segment at 395-411 (SSFVVLYLVTAVYFSGV) threads the bilayer. At 412–415 (MVRL) the chain is on the lumenal side. R414 lines the dolichyl diphosphooligosaccharide pocket. Residues 416 to 437 (MLVLAPAACILSGIALSEAFDV) traverse the membrane as a helical segment. Topologically, residues 438–525 (LTRSVKYQLS…KLLVLPMEAS (88 aa)) are cytoplasmic. Over residues 453–475 (SPAASGDSSAESSSASTVSTNSA) the composition is skewed to low complexity. The disordered stretch occupies residues 453–507 (SPAASGDSSAESSSASTVSTNSAKNETRPEKTETAPKEKPSKKNRKKEKEVAESV). The segment covering 477-504 (NETRPEKTETAPKEKPSKKNRKKEKEVA) has biased composition (basic and acidic residues). Residues 526-546 (VLGILLLIVLGGFYVVHCVWA) traverse the membrane as a helical segment. The Lumenal segment spans residues 547-787 (AAEAYSAPSI…AAGRKKNPWQ (241 aa)). The tract at residues 592-594 (WWD) is interacts with target acceptor peptide in protein substrate. The short motif at 592–596 (WWDYG) is the WWDYG motif element. Position 597 (Y597) interacts with dolichyl diphosphooligosaccharide. N604 and N611 each carry an N-linked (GlcNAc...) asparagine glycan. The N-linked (GlcNAc...) (high mannose) asparagine glycan is linked to N615. The short motif at 659-666 (DINKFLWM) is the DK motif element. The segment covering 759–769 (RVRGKLKKLKS) has biased composition (basic residues). Positions 759–787 (RVRGKLKKLKSGSKASSTNAAGRKKNPWQ) are disordered.

The protein belongs to the STT3 family. As to quaternary structure, component of the oligosaccharyltransferase (OST) complex. The cofactor is Mg(2+). Mn(2+) serves as cofactor.

It is found in the endoplasmic reticulum membrane. The enzyme catalyses a di-trans,poly-cis-dolichyl diphosphooligosaccharide + L-asparaginyl-[protein] = N(4)-(oligosaccharide-(1-&gt;4)-N-acetyl-beta-D-glucosaminyl-(1-&gt;4)-N-acetyl-beta-D-glucosaminyl)-L-asparaginyl-[protein] + a di-trans,poly-cis-dolichyl diphosphate + H(+). It participates in protein modification; protein glycosylation. In terms of biological role, catalytic subunit of the oligosaccharyl transferase (OST) complex that catalyzes the initial transfer of a defined glycan (Glc(3)Man(9)GlcNAc(2) in eukaryotes) from the lipid carrier dolichol-pyrophosphate to an asparagine residue within an Asn-X-Ser/Thr consensus motif in nascent polypeptide chains, the first step in protein N-glycosylation. N-glycosylation occurs cotranslationally and the complex associates with the Sec61 complex at the channel-forming translocon complex that mediates protein translocation across the endoplasmic reticulum (ER). All subunits are required for a maximal enzyme activity. This subunit contains the active site and the acceptor peptide and donor lipid-linked oligosaccharide (LLO) binding pockets. The protein is Dolichyl-diphosphooligosaccharide--protein glycosyltransferase subunit STT3A (STT3A) of Oryza sativa subsp. japonica (Rice).